The chain runs to 156 residues: 6,7-dimethyl-8-ribityllumazine synthase (156 aa).

5-amino-6-(D-ribitylamino)uracil is bound by residues Phe-23, Ala-57 to Glu-59, and Ala-81 to Ile-83. Gly-86–Thr-87 serves as a coordination point for (2S)-2-hydroxy-3-oxobutyl phosphate. The active-site Proton donor is His-89. Phe-114 serves as a coordination point for 5-amino-6-(D-ribitylamino)uracil. Arg-128 contacts (2S)-2-hydroxy-3-oxobutyl phosphate.

It belongs to the DMRL synthase family.

It carries out the reaction (2S)-2-hydroxy-3-oxobutyl phosphate + 5-amino-6-(D-ribitylamino)uracil = 6,7-dimethyl-8-(1-D-ribityl)lumazine + phosphate + 2 H2O + H(+). Its pathway is cofactor biosynthesis; riboflavin biosynthesis; riboflavin from 2-hydroxy-3-oxobutyl phosphate and 5-amino-6-(D-ribitylamino)uracil: step 1/2. In terms of biological role, catalyzes the formation of 6,7-dimethyl-8-ribityllumazine by condensation of 5-amino-6-(D-ribitylamino)uracil with 3,4-dihydroxy-2-butanone 4-phosphate. This is the penultimate step in the biosynthesis of riboflavin. The protein is 6,7-dimethyl-8-ribityllumazine synthase of Helicobacter pylori (strain HPAG1).